The primary structure comprises 153 residues: Glutamyl-tRNA(Gln) amidotransferase subunit C, mitochondrial (153 aa).

Positions 31 to 55 (HPTKVPQQPEPNAFPDLDNNTDDDP) are disordered.

The protein belongs to the GatC family. Subunit of the heterotrimeric GatCAB amidotransferase (AdT) complex, composed of A, B and C subunits.

The protein resides in the mitochondrion. It carries out the reaction L-glutamyl-tRNA(Gln) + L-glutamine + ATP + H2O = L-glutaminyl-tRNA(Gln) + L-glutamate + ADP + phosphate + H(+). In terms of biological role, allows the formation of correctly charged Gln-tRNA(Gln) through the transamidation of misacylated Glu-tRNA(Gln) in the mitochondria. The reaction takes place in the presence of glutamine and ATP through an activated gamma-phospho-Glu-tRNA(Gln). The polypeptide is Glutamyl-tRNA(Gln) amidotransferase subunit C, mitochondrial (Drosophila willistoni (Fruit fly)).